We begin with the raw amino-acid sequence, 131 residues long: MSTKTVPEPEPHVLAVDDSIVDRTVISRLLRSSKYRVTTVDSGKRALEVLSLDRNVHMIITDYCMPEMTGFDLLKRVKESAELKEIPVVLMSSENSPTRIRRCLEEGAEDFLIKPVRPSDVSRLCNRVIMK.

The 118-residue stretch at 12-129 (HVLAVDDSIV…DVSRLCNRVI (118 aa)) folds into the Response regulatory domain. Aspartate 62 carries the post-translational modification 4-aspartylphosphate.

This sequence belongs to the ARR family. Type-A subfamily. Post-translationally, two-component system major event consists of a His-to-Asp phosphorelay between a sensor histidine kinase (HK) and a response regulator (RR). In plants, the His-to-Asp phosphorelay involves an additional intermediate named Histidine-containing phosphotransfer protein (HPt). This multistep phosphorelay consists of a His-Asp-His-Asp sequential transfer of a phosphate group between first a His and an Asp of the HK protein, followed by the transfer to a conserved His of the HPt protein and finally the transfer to an Asp in the receiver domain of the RR protein. As to expression, expressed in roots, mature leaves and flowers, and at low levels in shoots.

Functions as a response regulator involved in His-to-Asp phosphorelay signal transduction system. Phosphorylation of the Asp residue in the receiver domain activates the ability of the protein to promote the transcription of target genes. Type-A response regulators seem to act as negative regulators of the cytokinin signaling. The polypeptide is Two-component response regulator ORR3 (Oryza sativa subsp. indica (Rice)).